Reading from the N-terminus, the 559-residue chain is Beta-glucuronidase (559 aa).

An N-terminal signal peptide occupies residues 1-19; it reads MKRILGLIAYASVPTVINA. 4 N-linked (GlcNAc...) asparagine glycosylation sites follow: Asn-53, Asn-91, Asn-99, and Asn-143. Catalysis depends on Glu-194, which acts as the Proton donor. N-linked (GlcNAc...) asparagine glycosylation is found at Asn-203, Asn-222, and Asn-280. Catalysis depends on Glu-312, which acts as the Nucleophile. Residues Asn-427, Asn-440, Asn-465, Asn-491, and Asn-520 are each glycosylated (N-linked (GlcNAc...) asparagine).

It belongs to the glycosyl hydrolase 79 family.

It localises to the secreted. The enzyme catalyses a beta-D-glucuronoside + H2O = D-glucuronate + an alcohol. Its function is as follows. Beta-glucuronidase that hydrolyzes beta-glucuronosyl and 4-O-methyl-beta-glucuronosyl residues of arabinogalactan-protein. Hydrolyzed heparan sulfate only very weakly. Has no activity on xylan from birchwood. Able to catalyze the transglycosylation of glucuronic acid (GlcA) residues from p-nitrophenyl-beta-glucuronic acid (PNP beta-GlcA) to various monosaccharide acceptors such as glucose, galactose and xylose. This Neurospora crassa (strain ATCC 24698 / 74-OR23-1A / CBS 708.71 / DSM 1257 / FGSC 987) protein is Beta-glucuronidase.